The sequence spans 342 residues: Anthranilate phosphoribosyltransferase (342 aa).

Residues G81, 84–85 (GD), T89, 91–94 (NVST), 109–117 (KHGNRAASS), and A121 each bind 5-phospho-alpha-D-ribose 1-diphosphate. Anthranilate is bound at residue G81. S93 contributes to the Mg(2+) binding site. Residue N112 participates in anthranilate binding. R167 is an anthranilate binding site. Positions 226 and 227 each coordinate Mg(2+).

This sequence belongs to the anthranilate phosphoribosyltransferase family. In terms of assembly, homodimer. Mg(2+) is required as a cofactor.

The enzyme catalyses N-(5-phospho-beta-D-ribosyl)anthranilate + diphosphate = 5-phospho-alpha-D-ribose 1-diphosphate + anthranilate. Its pathway is amino-acid biosynthesis; L-tryptophan biosynthesis; L-tryptophan from chorismate: step 2/5. In terms of biological role, catalyzes the transfer of the phosphoribosyl group of 5-phosphorylribose-1-pyrophosphate (PRPP) to anthranilate to yield N-(5'-phosphoribosyl)-anthranilate (PRA). The polypeptide is Anthranilate phosphoribosyltransferase (Beijerinckia indica subsp. indica (strain ATCC 9039 / DSM 1715 / NCIMB 8712)).